The following is a 212-amino-acid chain: Interleukin-6 (212 aa).

The N-terminal stretch at 1–27 is a signal peptide; it reads MNSVSTSAFGPVAFSLGLLLVLPAAFP. Residues Cys-72 and Cys-78 are joined by a disulfide bond. N-linked (GlcNAc...) asparagine glycosylation occurs at Asn-73. Ser-81 carries the post-translational modification Phosphoserine. An intrachain disulfide couples Cys-101 to Cys-111. Asn-172 carries N-linked (GlcNAc...) asparagine glycosylation.

Belongs to the IL-6 superfamily. Component of a hexamer of two molecules each of IL6, IL6R and IL6ST; first binds to IL6R to associate with the signaling subunit IL6ST. Interacts with IL6R (via the N-terminal ectodomain); this interaction may be affected by IL6R-binding with SORL1, hence decreasing IL6 cis signaling. Interacts with SORL1 (via the N-terminal ectodomain); this interaction leads to IL6 internalization and lysosomal degradation. May form a trimeric complex with the soluble SORL1 ectodomain and soluble IL6R receptor; this interaction might stabilize circulating IL6, hence promoting IL6 trans signaling.

It is found in the secreted. Its function is as follows. Cytokine with a wide variety of biological functions in immunity, tissue regeneration, and metabolism. Binds to IL6R, then the complex associates to the signaling subunit IL6ST/gp130 to trigger the intracellular IL6-signaling pathway. The interaction with the membrane-bound IL6R and IL6ST stimulates 'classic signaling', whereas the binding of IL6 and soluble IL6R to IL6ST stimulates 'trans-signaling'. Alternatively, 'cluster signaling' occurs when membrane-bound IL6:IL6R complexes on transmitter cells activate IL6ST receptors on neighboring receiver cells. Functionally, IL6 is a potent inducer of the acute phase response. Rapid production of IL6 contributes to host defense during infection and tissue injury, but excessive IL6 synthesis is involved in disease pathology. In the innate immune response, is synthesized by myeloid cells, such as macrophages and dendritic cells, upon recognition of pathogens through toll-like receptors (TLRs) at the site of infection or tissue injury. In the adaptive immune response, is required for the differentiation of B cells into immunoglobulin-secreting cells. Plays a major role in the differentiation of CD4(+) T cell subsets. Essential factor for the development of T follicular helper (Tfh) cells that are required for the induction of germinal-center formation. Required to drive naive CD4(+) T cells to the Th17 lineage. Also required for proliferation of myeloma cells and the survival of plasmablast cells. Acts as an essential factor in bone homeostasis and on vessels directly or indirectly by induction of VEGF, resulting in increased angiogenesis activity and vascular permeability. Induces, through 'trans-signaling' and synergistically with IL1B and TNF, the production of VEGF. Involved in metabolic controls, is discharged into the bloodstream after muscle contraction increasing lipolysis and improving insulin resistance. 'Trans-signaling' in central nervous system also regulates energy and glucose homeostasis. Mediates, through GLP-1, crosstalk between insulin-sensitive tissues, intestinal L cells and pancreatic islets to adapt to changes in insulin demand. Also acts as a myokine. Plays a protective role during liver injury, being required for maintenance of tissue regeneration. Also has a pivotal role in iron metabolism by regulating HAMP/hepcidin expression upon inflammation or bacterial infection. Through activation of IL6ST-YAP-NOTCH pathway, induces inflammation-induced epithelial regeneration. This is Interleukin-6 (IL6) from Macaca thibetana (Pere David's macaque).